The primary structure comprises 201 residues: Peroxiredoxin prdx-2 (201 aa).

Residues 10–168 enclose the Thioredoxin domain; it reads AFIGKPAPQF…TLRLVQAFQF (159 aa). Cysteine 55 functions as the Cysteine sulfenic acid (-SOH) intermediate in the catalytic mechanism.

This sequence belongs to the peroxiredoxin family. AhpC/Prx1 subfamily. In terms of assembly, monomer and homodimer; disulfide-linked. Under nonstress conditions, present in the reduced monomeric form. Forms active hyperoxidized monomers and disulfide-linked homodimers upon oxidation by hydrogen peroxide. Forms active oxidized homodimers in response to the drug metformin. Post-translationally, the enzyme can be inactivated by further oxidation of the cysteine sulfenic acid (C(P)-SOH) to sulphinic acid (C(P)-SO2H) instead of its condensation to a disulfide bond. As to expression, expressed in the gonad, neurons and intestine (at protein level). Expressed in the pharyngeal inter-neuron I4 and the sensory interneuron I2. Expressed in the intestine, pharyngeal muscle 1, vulval muscle, body wall muscle, epithelial cells e1 and e3, and neurons in the head and tail.

The protein localises to the cytoplasm. The enzyme catalyses a hydroperoxide + [thioredoxin]-dithiol = an alcohol + [thioredoxin]-disulfide + H2O. Its activity is regulated as follows. Activated following oxidation of the conserved redox-active cysteine residue, which subsequently allows for the oxidation and activation of substrates. In terms of biological role, thiol-specific peroxidase that catalyzes the reduction of hydrogen peroxide and organic hydroperoxides to water and alcohols, respectively. In I2 pharyngeal neurons, required for the inhibition of feeding in response to light and hydrogen peroxide. In the intestine, plays a role in protecting cells against oxidative stress by detoxifying peroxides such as hydrogen peroxide. In addition, plays a role in the recovery from oxidative stress induced by hydrogen peroxide. In its hyperoxidized form (induced by hydrogen peroxide), confers protection against heat stress. However, has a low tendency for overoxidation during the normal lifespan. Increases sensitivity to cytotoxicity caused by metalloids and heavy metals such as arsenic and cadmium by playing a role in inhibiting the expression of phase II detoxification genes such as gcs-1 in intestinal cells. In addition, in response to arsenite, promotes the secretion of the insulin ligand daf-28 into the pseudocoelom, which negatively regulates the activities of daf-16 and skn-1. Plays a role in promoting longevity. Plays a role in the mitohormetic pathway by promoting the activation of pmk-1 in response to the drug metformin. The sequence is that of Peroxiredoxin prdx-2 from Caenorhabditis elegans.